The sequence spans 122 residues: Large ribosomal subunit protein uL14c (122 aa).

This sequence belongs to the universal ribosomal protein uL14 family. In terms of assembly, part of the 50S ribosomal subunit.

The protein resides in the plastid. It localises to the chloroplast. In terms of biological role, binds to 23S rRNA. The protein is Large ribosomal subunit protein uL14c of Psilotum nudum (Whisk fern).